Consider the following 269-residue polypeptide: Formamidopyrimidine-DNA glycosylase (269 aa).

Catalysis depends on P2, which acts as the Schiff-base intermediate with DNA. Catalysis depends on E3, which acts as the Proton donor. K57 (proton donor; for beta-elimination activity) is an active-site residue. Positions 90, 109, and 150 each coordinate DNA. An FPG-type zinc finger spans residues 235–269; the sequence is QVYGRKGEPCRVCGTPIVATKHAQRATFYCRHCQK. Catalysis depends on R259, which acts as the Proton donor; for delta-elimination activity.

The protein belongs to the FPG family. As to quaternary structure, monomer. Requires Zn(2+) as cofactor.

It catalyses the reaction Hydrolysis of DNA containing ring-opened 7-methylguanine residues, releasing 2,6-diamino-4-hydroxy-5-(N-methyl)formamidopyrimidine.. The enzyme catalyses 2'-deoxyribonucleotide-(2'-deoxyribose 5'-phosphate)-2'-deoxyribonucleotide-DNA = a 3'-end 2'-deoxyribonucleotide-(2,3-dehydro-2,3-deoxyribose 5'-phosphate)-DNA + a 5'-end 5'-phospho-2'-deoxyribonucleoside-DNA + H(+). In terms of biological role, involved in base excision repair of DNA damaged by oxidation or by mutagenic agents. Acts as a DNA glycosylase that recognizes and removes damaged bases. Has a preference for oxidized purines, such as 7,8-dihydro-8-oxoguanine (8-oxoG). Has AP (apurinic/apyrimidinic) lyase activity and introduces nicks in the DNA strand. Cleaves the DNA backbone by beta-delta elimination to generate a single-strand break at the site of the removed base with both 3'- and 5'-phosphates. This Salmonella heidelberg (strain SL476) protein is Formamidopyrimidine-DNA glycosylase.